A 120-amino-acid chain; its full sequence is Acylphosphatase-1 (120 aa).

The residue at position 2 (Ala-2) is an N-acetylalanine. Positions 8–98 (SCEFEVFGRV…YGYANFHIKP (91 aa)) constitute an Acylphosphatase-like domain. Catalysis depends on residues Arg-23 and Asn-41. Residues 91–120 (YANFHIKPDPHENRPVHEGLGSSSSHHDSN) are disordered. Residues 96–107 (IKPDPHENRPVH) show a composition bias toward basic and acidic residues.

This sequence belongs to the acylphosphatase family.

Its subcellular location is the cytoplasm. It catalyses the reaction an acyl phosphate + H2O = a carboxylate + phosphate + H(+). The polypeptide is Acylphosphatase-1 (Acyp) (Drosophila melanogaster (Fruit fly)).